The primary structure comprises 64 residues: Large ribosomal subunit protein bL35 (64 aa).

Disordered stretches follow at residues 1-22 and 34-64; these read MPKAKTHSGASKRFRRTGTGKI and EHKPSTRTRRLDGHTRVSANDTQRVNSLLNG. Residues 34–48 show a composition bias toward basic and acidic residues; that stretch reads EHKPSTRTRRLDGHT. Residues 50–64 show a composition bias toward polar residues; it reads VSANDTQRVNSLLNG.

This sequence belongs to the bacterial ribosomal protein bL35 family.

This is Large ribosomal subunit protein bL35 from Mycobacterium leprae (strain Br4923).